The chain runs to 227 residues: Myogenin (227 aa).

A bHLH domain is found at 82-133; it reads DRRRAATLREKRRLKKVNEAFEALKRSTLLNPNQRLPKVEILRSAIQYIERL. The interval 147–196 is disordered; it reads QRELRYRPAAPQPAAPSECGSGSSSCSPEWSTQLEFGTNPADHLLSDDQA. Positions 161-175 are enriched in low complexity; it reads APSECGSGSSSCSPE.

Homodimer and heterodimer. Efficient DNA binding requires dimerization with another bHLH protein.

The protein resides in the nucleus. Functionally, acts as a transcriptional activator that promotes transcription of muscle-specific target genes and plays a role in muscle differentiation. Induces fibroblasts to differentiate into myoblasts. Probable sequence specific DNA-binding protein. The sequence is that of Myogenin (MYOG) from Gallus gallus (Chicken).